The primary structure comprises 183 residues: (2E)-enoyl-[ACP] glycyltransferase (183 aa).

It belongs to the FcoT family.

It carries out the reaction a (3R)-3-[(carboxymethyl)amino]fatty acid + holo-[ACP] + H(+) = a (2E)-enoyl-[ACP] + glycine + H2O. It catalyses the reaction (3R)-3-[(carboxylmethyl)amino]decanoate + holo-[ACP] + H(+) = (2E)-decenoyl-[ACP] + glycine + H2O. The enzyme catalyses a fatty acyl-CoA + H2O = a fatty acid + CoA + H(+). Involved in the biosynthesis of a unique class of isonitrile lipopeptides (INLPs) that seem to play a role in metal acquisition. Catalyzes a Michael addition of glycine to the beta-position of an alpha,beta-unsaturated fatty acyl-[ACP], producing a (3R)-3-[(carboxymethyl)amino]fatty acid. Acts on the (2E)-decenoyl moiety loaded on the acyl-carrier protein (ACP) BQ2027_MB0103, forming the product (3R)-3-[(carboxymethyl)amino]decanoate released from the ACP. Displays thioesterase activity with a preference for long chain fatty acyl groups. The sequence is that of (2E)-enoyl-[ACP] glycyltransferase from Mycobacterium bovis (strain ATCC BAA-935 / AF2122/97).